An 81-amino-acid polypeptide reads, in one-letter code: Photosystem I iron-sulfur center (81 aa).

4Fe-4S ferredoxin-type domains are found at residues serine 2–tryptophan 31 and isoleucine 39–tyrosine 68. The [4Fe-4S] cluster site is built by cysteine 11, cysteine 14, cysteine 17, cysteine 21, cysteine 48, cysteine 51, cysteine 54, and cysteine 58.

As to quaternary structure, the eukaryotic PSI reaction center is composed of at least 11 subunits. [4Fe-4S] cluster serves as cofactor.

The protein localises to the plastid. The protein resides in the chloroplast thylakoid membrane. The catalysed reaction is reduced [plastocyanin] + hnu + oxidized [2Fe-2S]-[ferredoxin] = oxidized [plastocyanin] + reduced [2Fe-2S]-[ferredoxin]. Its function is as follows. Apoprotein for the two 4Fe-4S centers FA and FB of photosystem I (PSI); essential for photochemical activity. FB is the terminal electron acceptor of PSI, donating electrons to ferredoxin. The C-terminus interacts with PsaA/B/D and helps assemble the protein into the PSI complex. Required for binding of PsaD and PsaE to PSI. PSI is a plastocyanin/cytochrome c6-ferredoxin oxidoreductase, converting photonic excitation into a charge separation, which transfers an electron from the donor P700 chlorophyll pair to the spectroscopically characterized acceptors A0, A1, FX, FA and FB in turn. The polypeptide is Photosystem I iron-sulfur center (Emiliania huxleyi (Coccolithophore)).